A 179-amino-acid polypeptide reads, in one-letter code: Translation initiation factor IF-3 (179 aa).

Belongs to the IF-3 family. As to quaternary structure, monomer.

It is found in the cytoplasm. In terms of biological role, IF-3 binds to the 30S ribosomal subunit and shifts the equilibrium between 70S ribosomes and their 50S and 30S subunits in favor of the free subunits, thus enhancing the availability of 30S subunits on which protein synthesis initiation begins. This is Translation initiation factor IF-3 from Leptospira interrogans serogroup Icterohaemorrhagiae serovar copenhageni (strain Fiocruz L1-130).